Consider the following 380-residue polypeptide: Glutamate 5-kinase (380 aa).

Residue lysine 20 participates in ATP binding. Residues serine 59, aspartate 146, and asparagine 158 each contribute to the substrate site. Residue 220-226 coordinates ATP; the sequence is TGGMYSK. Residues 285–363 enclose the PUA domain; sequence SGTVTVDEGA…HEVAAILGDA (79 aa).

The protein belongs to the glutamate 5-kinase family.

It is found in the cytoplasm. The enzyme catalyses L-glutamate + ATP = L-glutamyl 5-phosphate + ADP. Its pathway is amino-acid biosynthesis; L-proline biosynthesis; L-glutamate 5-semialdehyde from L-glutamate: step 1/2. Catalyzes the transfer of a phosphate group to glutamate to form L-glutamate 5-phosphate. The protein is Glutamate 5-kinase of Nitratidesulfovibrio vulgaris (strain ATCC 29579 / DSM 644 / CCUG 34227 / NCIMB 8303 / VKM B-1760 / Hildenborough) (Desulfovibrio vulgaris).